Here is a 527-residue protein sequence, read N- to C-terminus: Cytokinin dehydrogenase 6 (527 aa).

A signal peptide spans 1–22 (MAARCSIAFMVMASCLSVVVSG). Residues 55-236 (VAAAPEAVLH…TRARIGLEPA (182 aa)) enclose the FAD-binding PCMH-type domain. FAD is bound by residues Gly-91 and Gly-93. Residue His-94 is modified to Pros-8alpha-FAD histidine. Ser-95 and Gln-99 together coordinate FAD. Asn-121 carries N-linked (GlcNAc...) asparagine glycosylation. Positions 160, 165, 171, 175, and 226 each coordinate FAD. N-linked (GlcNAc...) asparagine glycans are attached at residues Asn-280 and Asn-323. 3 residues coordinate FAD: Tyr-475, Ser-510, and Gln-513.

This sequence belongs to the oxygen-dependent FAD-linked oxidoreductase family. In terms of assembly, monomer. FAD is required as a cofactor.

The protein localises to the secreted. It is found in the extracellular space. It catalyses the reaction N(6)-dimethylallyladenine + A + H2O = 3-methyl-2-butenal + adenine + AH2. In terms of biological role, catalyzes the oxidation of cytokinins, a family of N(6)-substituted adenine derivatives that are plant hormones, where the substituent is an isopentenyl group. In Oryza sativa subsp. japonica (Rice), this protein is Cytokinin dehydrogenase 6 (CKX6).